The primary structure comprises 114 residues: U5-lycotoxin-Ls1a (114 aa).

The signal sequence occupies residues 1–20; sequence MKYQILFGVVFLTLLSYCYS. Residues 21–45 constitute a propeptide that is removed on maturation; that stretch reads EIEDEFENFVDEEMVEADDPFSLAR. Intrachain disulfides connect Cys-51-Cys-66, Cys-65-Cys-93, and Cys-77-Cys-91.

This sequence belongs to the neurotoxin 19 (CSTX) family. 04 (U1-Lctx) subfamily. Expressed by the venom gland.

Its subcellular location is the secreted. In Lycosa singoriensis (Wolf spider), this protein is U5-lycotoxin-Ls1a.